The following is a 473-amino-acid chain: MAVKTYSAGVKEYRQTYWMPEYTPLDTDILACFKITPQAGVDREEAAAAVAAESSTGTWTTVWTDLLTDLDYYKGRAYAIEDVPGDDTCFYAFIAYPIDLFEEGSVVNVFTSLVGNVFGFKAVRALRLEDVRFPIAYVKTCGGPPHGIQVERDVMNKYGRPLLGCTIKPKLGLSAKNYGRAVYECLRGGLDFTKDDENVNSQPFMRWRQRFDFVMEAIQKSERETGERKGHYLNVTAPTPEEMYKRAEYAKEIGAPIIMHDYITGGFCANTGLANWCRDNGMLLHIHRAMHAVLDRNPHHGIHFRVLTKILRLSGGDHLHSGTVVGKLEGDREATLGWIDMMRDSFVKEDRSRGIFFDQDWGSMPGVFPVASGGIHVWHMPALVTIFGDDSVLQFGGGTLGHPWGNAAGAAANRVALEACVEARNKGVAIEKEGKTVLTEAAKNSPELKIAMETWKEIKFEFDTVDKLDVAHK.

Positions 116 and 166 each coordinate substrate. Catalysis depends on Lys168, which acts as the Proton acceptor. Lys170 lines the substrate pocket. The Mg(2+) site is built by Lys194, Asp196, and Glu197. Lys194 bears the N6-carboxylysine mark. His287 serves as the catalytic Proton acceptor. Substrate contacts are provided by Arg288, His320, and Ser372.

Belongs to the RuBisCO large chain family. Type I subfamily. As to quaternary structure, heterohexadecamer of 8 large chains and 8 small chains. In R.sphaeroides the complex is approximately 500 kDa. The cofactor is Mg(2+).

It carries out the reaction 2 (2R)-3-phosphoglycerate + 2 H(+) = D-ribulose 1,5-bisphosphate + CO2 + H2O. It catalyses the reaction D-ribulose 1,5-bisphosphate + O2 = 2-phosphoglycolate + (2R)-3-phosphoglycerate + 2 H(+). RuBisCO catalyzes two reactions: the carboxylation of D-ribulose 1,5-bisphosphate, the primary event in carbon dioxide fixation, as well as the oxidative fragmentation of the pentose substrate. Both reactions occur simultaneously and in competition at the same active site. In Thiobacillus denitrificans (strain ATCC 25259 / T1), this protein is Ribulose bisphosphate carboxylase large chain.